We begin with the raw amino-acid sequence, 69 residues long: Large ribosomal subunit protein bL31 (69 aa).

The Zn(2+) site is built by C16, C18, C38, and C41.

The protein belongs to the bacterial ribosomal protein bL31 family. Type A subfamily. In terms of assembly, part of the 50S ribosomal subunit. Requires Zn(2+) as cofactor.

Functionally, binds the 23S rRNA. This Cutibacterium acnes (strain DSM 16379 / KPA171202) (Propionibacterium acnes) protein is Large ribosomal subunit protein bL31.